A 295-amino-acid chain; its full sequence is Tyrosine recombinase XerC (295 aa).

Residues M1–V85 form the Core-binding (CB) domain. Residues H106 to D285 enclose the Tyr recombinase domain. Active-site residues include R145, K169, H237, R240, and H263. Y272 (O-(3'-phospho-DNA)-tyrosine intermediate) is an active-site residue.

The protein belongs to the 'phage' integrase family. XerC subfamily. As to quaternary structure, forms a cyclic heterotetrameric complex composed of two molecules of XerC and two molecules of XerD.

The protein resides in the cytoplasm. Functionally, site-specific tyrosine recombinase, which acts by catalyzing the cutting and rejoining of the recombining DNA molecules. The XerC-XerD complex is essential to convert dimers of the bacterial chromosome into monomers to permit their segregation at cell division. It also contributes to the segregational stability of plasmids. The protein is Tyrosine recombinase XerC of Haemophilus influenzae (strain 86-028NP).